The following is a 127-amino-acid chain: Small ribosomal subunit protein uS13 (127 aa).

Residues 93-127 (RRGMPVRGQRTRTNARTRRGRRGQAIGIKKKATKK) are disordered.

The protein belongs to the universal ribosomal protein uS13 family. In terms of assembly, part of the 30S ribosomal subunit. Forms a loose heterodimer with protein S19. Forms two bridges to the 50S subunit in the 70S ribosome.

Its function is as follows. Located at the top of the head of the 30S subunit, it contacts several helices of the 16S rRNA. In the 70S ribosome it contacts the 23S rRNA (bridge B1a) and protein L5 of the 50S subunit (bridge B1b), connecting the 2 subunits; these bridges are implicated in subunit movement. Contacts the tRNAs in the A and P-sites. The sequence is that of Small ribosomal subunit protein uS13 from Chloroflexus aurantiacus (strain ATCC 29366 / DSM 635 / J-10-fl).